Consider the following 272-residue polypeptide: MMEPKSIFLLGLLLFRVGKLMRNDKLAWSAEYEAKKFKFYHNTSLFLTLQSTGPEMTNLCKKSWCDKVDDYFVVPHHYVNWQKPTEQWLIHHFSKMILHTRRLPQQAQWYMFAFDNNYFFVERLIKELSKFDSHLPIYTILRDFHADIQHKPVLIFSRSALNTFYDLEEENCSENAENVEEWLTTCMSIPPITISVDRSKKSRIFAIKRHFQVDEMKTMPNDYHDDKDYIHRHSSSLLSFTNLSLEDLKLLPIFVEKVQGGYKKKAASKILF.

A signal peptide spans 1–20 (MMEPKSIFLLGLLLFRVGKL).

This is an uncharacterized protein from Caenorhabditis elegans.